A 360-amino-acid chain; its full sequence is Peptide chain release factor 1 (360 aa).

Position 235 is an N5-methylglutamine (Q235).

This sequence belongs to the prokaryotic/mitochondrial release factor family. In terms of processing, methylated by PrmC. Methylation increases the termination efficiency of RF1.

Its subcellular location is the cytoplasm. Functionally, peptide chain release factor 1 directs the termination of translation in response to the peptide chain termination codons UAG and UAA. The protein is Peptide chain release factor 1 of Dechloromonas aromatica (strain RCB).